The sequence spans 265 residues: Hydroxyethylthiazole kinase (265 aa).

M41 contributes to the substrate binding site. ATP contacts are provided by R117 and S163. G190 provides a ligand contact to substrate.

The protein belongs to the Thz kinase family. Requires Mg(2+) as cofactor.

The catalysed reaction is 5-(2-hydroxyethyl)-4-methylthiazole + ATP = 4-methyl-5-(2-phosphooxyethyl)-thiazole + ADP + H(+). It participates in cofactor biosynthesis; thiamine diphosphate biosynthesis; 4-methyl-5-(2-phosphoethyl)-thiazole from 5-(2-hydroxyethyl)-4-methylthiazole: step 1/1. Its function is as follows. Catalyzes the phosphorylation of the hydroxyl group of 4-methyl-5-beta-hydroxyethylthiazole (THZ). The protein is Hydroxyethylthiazole kinase of Pediococcus pentosaceus (strain ATCC 25745 / CCUG 21536 / LMG 10740 / 183-1w).